The primary structure comprises 472 residues: Divalent metal cation transporter MntH (472 aa).

The next 11 membrane-spanning stretches (helical) occupy residues 59–79 (LLAF…PGNW), 92–112 (MLLS…ALAA), 136–156 (LALW…EVIG), 167–187 (VPII…LLLM), 196–216 (AFVI…IVLA), 233–253 (VVAD…TVMP), 288–308 (LALM…AAVF), 325–345 (LLAP…ALLA), 377–397 (VLTR…YGEQ), 402–422 (LLLL…IPLL), and 439–459 (WLMV…VKLL).

This sequence belongs to the NRAMP family.

It is found in the cell inner membrane. Functionally, h(+)-stimulated, divalent metal cation uptake system. This Xylella fastidiosa (strain 9a5c) protein is Divalent metal cation transporter MntH.